The chain runs to 52 residues: UPF0181 protein HI_1434.2 (52 aa).

Belongs to the UPF0181 family.

The protein is UPF0181 protein HI_1434.2 of Haemophilus influenzae (strain ATCC 51907 / DSM 11121 / KW20 / Rd).